A 280-amino-acid polypeptide reads, in one-letter code: NAD-capped RNA hydrolase NudC (280 aa).

Arg83 is a binding site for substrate. The Zn(2+) site is built by Cys113, Cys116, Cys131, and Cys134. Tyr139 lines the substrate pocket. The 129-residue stretch at Pro140–Leu268 folds into the Nudix hydrolase domain. A divalent metal cation is bound by residues Ala177, Glu193, and Glu197. The Nudix box motif lies at Gly178–Gly199. Gln211–Ser218 is a binding site for substrate. Glu238 lines the a divalent metal cation pocket.

The protein belongs to the Nudix hydrolase family. NudC subfamily. In terms of assembly, homodimer. The cofactor is Mg(2+). Mn(2+) is required as a cofactor. It depends on Zn(2+) as a cofactor.

The catalysed reaction is a 5'-end NAD(+)-phospho-ribonucleoside in mRNA + H2O = a 5'-end phospho-adenosine-phospho-ribonucleoside in mRNA + beta-nicotinamide D-ribonucleotide + 2 H(+). It catalyses the reaction NAD(+) + H2O = beta-nicotinamide D-ribonucleotide + AMP + 2 H(+). The enzyme catalyses NADH + H2O = reduced beta-nicotinamide D-ribonucleotide + AMP + 2 H(+). Its function is as follows. mRNA decapping enzyme that specifically removes the nicotinamide adenine dinucleotide (NAD) cap from a subset of mRNAs by hydrolyzing the diphosphate linkage to produce nicotinamide mononucleotide (NMN) and 5' monophosphate mRNA. The NAD-cap is present at the 5'-end of some mRNAs and stabilizes RNA against 5'-processing. Has preference for mRNAs with a 5'-end purine. Catalyzes the hydrolysis of a broad range of dinucleotide pyrophosphates. The chain is NAD-capped RNA hydrolase NudC from Deinococcus radiodurans (strain ATCC 13939 / DSM 20539 / JCM 16871 / CCUG 27074 / LMG 4051 / NBRC 15346 / NCIMB 9279 / VKM B-1422 / R1).